We begin with the raw amino-acid sequence, 216 residues long: MKQDSRFPNLFILDHPLIQHKLTHMRDKDTSTRTFRELLREITLLMGYEITRNLPITTKRVETPLVEIDAPVIAGKKLAIVPVLRAGVGMSDGLLELIPSARVGHIGVYRADDHRPVEYLVRLPDLEDRIFILCDPMVATGYSAAHAIDVLKRRGVPGERLMFLALVAAPEGVQVFQDAHPDVKLYVASLDSHLDDHAYIVPGLGDAGDRLFGTKN.

5-phospho-alpha-D-ribose 1-diphosphate is bound by residues Arg85, Arg110, and 135 to 143 (DPMVATGYS). Residues Ile200 and 205–207 (GDA) each bind uracil. Asp206 is a binding site for 5-phospho-alpha-D-ribose 1-diphosphate.

This sequence belongs to the UPRTase family. The cofactor is Mg(2+).

It carries out the reaction UMP + diphosphate = 5-phospho-alpha-D-ribose 1-diphosphate + uracil. It participates in pyrimidine metabolism; UMP biosynthesis via salvage pathway; UMP from uracil: step 1/1. With respect to regulation, allosterically activated by GTP. In terms of biological role, catalyzes the conversion of uracil and 5-phospho-alpha-D-ribose 1-diphosphate (PRPP) to UMP and diphosphate. This is Uracil phosphoribosyltransferase from Burkholderia mallei (strain NCTC 10247).